A 660-amino-acid polypeptide reads, in one-letter code: DNA polymerase alpha-associated DNA helicase A (660 aa).

232 to 239 is an ATP binding site; the sequence is GPPGTGKT.

Belongs to the DNA2/NAM7 helicase family. In terms of assembly, associates with the hexameric DNA polymerase alpha.

The protein resides in the cytoplasm. It localises to the nucleus. It catalyses the reaction ATP + H2O = ADP + phosphate + H(+). In terms of biological role, DNA polymerase alpha-associated DNA helicase which may be involved in DNA replication. The polypeptide is DNA polymerase alpha-associated DNA helicase A (hcs1) (Schizosaccharomyces pombe (strain 972 / ATCC 24843) (Fission yeast)).